We begin with the raw amino-acid sequence, 108 residues long: Small ribosomal subunit protein eS25x (108 aa).

Residues 1 to 36 form a disordered region; the sequence is MAPKKDKVPPPSSKPAKSGGGKQKKKKWSKGKQKEK. The segment covering 22–31 has biased composition (basic residues); that stretch reads KQKKKKWSKG.

This sequence belongs to the eukaryotic ribosomal protein eS25 family.

In Arabidopsis thaliana (Mouse-ear cress), this protein is Small ribosomal subunit protein eS25x (RPS25D).